A 229-amino-acid chain; its full sequence is Lipoprotein-releasing system ATP-binding protein LolD (229 aa).

The region spanning 6-229 (LELDAIERTY…DGHLTPYVPA (224 aa)) is the ABC transporter domain. 42–49 (GPSGSGKS) lines the ATP pocket.

The protein belongs to the ABC transporter superfamily. Lipoprotein translocase (TC 3.A.1.125) family. In terms of assembly, the complex is composed of two ATP-binding proteins (LolD) and two transmembrane proteins (LolC and LolE).

It is found in the cell inner membrane. Functionally, part of the ABC transporter complex LolCDE involved in the translocation of mature outer membrane-directed lipoproteins, from the inner membrane to the periplasmic chaperone, LolA. Responsible for the formation of the LolA-lipoprotein complex in an ATP-dependent manner. This chain is Lipoprotein-releasing system ATP-binding protein LolD, found in Maricaulis maris (strain MCS10) (Caulobacter maris).